The sequence spans 228 residues: uncharacterized protein (228 aa).

Positions 196 to 228 form a coiled coil; the sequence is VKITELLDKAKISINDLNKTIEKLNETVNKYHG.

This is an uncharacterized protein from Acanthamoeba polyphaga (Amoeba).